We begin with the raw amino-acid sequence, 590 residues long: MSNLGNNITERIESDCISQNECRIDVYFSEKEKESTEASINMFLAELERLQLEYGKEHIWQNEELNLQRVEYQGKDCILGITNFGDCIDDEWYIVWLLREASKAVKSAFVRIIDEDGEFLLIEAALSLPKWIDEDNSDYRVWIHNGEVIILRPEDEFLKKMNRCPPLTREQAIFQISSGSNLYTSREVNDSISQRLKKFPKAANVKLRAICTVPRKIVHVLQKNKNLISSAVNAFYYRDPIDENYCDRMSKFNQNDLVTTTITFTPLLYAQLYQQRCKTFRPFHLPSDVHSLDYERAILGMKLSCGFEILYNSKENVEKRTEIDEYLQIQPLPTDEDIKKIPLIEDDTSFMNVNPDELEELLEKKLNSFCDDFGDDERSGFDNTDHDNTLVGEEEMVPGNHGGKSINEEITKNKQKQNFNESDLKNMASRIETFINDEASNNHREDFYGVKNSDTDTDSDSLADSDDEIFLNRNQGIDEVEFDETKFYDLLKGKDGKYQNQDVDEFSSGNEDEMDIPGDANMEEYMRAMDEELYGGLRGRDEGLEGIDDKDIDLNLMKNIIEGIEANPDLYGGPISTLLNSLKIQIPREK.

Residues 445–464 (EDFYGVKNSDTDTDSDSLAD) are disordered. The span at 455–464 (TDTDSDSLAD) shows a compositional bias: acidic residues.

It belongs to the ECD family.

The protein localises to the cytoplasm. It localises to the nucleus. In terms of biological role, involved in the regulation of carbohydrate metabolism. May act as a transcription factor. The sequence is that of Protein ecdysoneless homolog from Schizosaccharomyces pombe (strain 972 / ATCC 24843) (Fission yeast).